Consider the following 325-residue polypeptide: Histone deacetylase 8 (325 aa).

Residues 1 to 272 (MSRVVKPKVA…WTYLTALIVG (272 aa)) are histone deacetylase. Substrate is bound at residue Asp49. His91 (proton acceptor) is an active-site residue. Gly99 is a substrate binding site. 3 residues coordinate a divalent metal cation: Asp126, His128, and Asp215. Tyr254 serves as a coordination point for substrate.

It belongs to the histone deacetylase family. HD type 1 subfamily. A divalent metal cation serves as cofactor.

It is found in the nucleus. Its subcellular location is the chromosome. The protein localises to the cytoplasm. It catalyses the reaction N(6)-acetyl-L-lysyl-[histone] + H2O = L-lysyl-[histone] + acetate. The catalysed reaction is N(6)-acetyl-L-lysyl-[protein] + H2O = L-lysyl-[protein] + acetate. It carries out the reaction N(6)-(2E)-butenoyl-L-lysyl-[protein] + H2O = (2E)-2-butenoate + L-lysyl-[protein]. Its activity is regulated as follows. Its activity is inhibited by trichostatin A (TSA) and butyrate, 2 well known histone deacetylase inhibitors. Functionally, histone deacetylase that catalyzes the deacetylation of lysine residues on the N-terminal part of the core histones (H2A, H2B, H3 and H4). Histone deacetylation gives a tag for epigenetic repression and plays an important role in transcriptional regulation, cell cycle progression and developmental events. Histone deacetylases act via the formation of large multiprotein complexes. Also involved in the deacetylation of non-histone proteins. In addition to protein deacetylase activity, also has protein-lysine deacylase activity: acts as a protein decrotonylase by mediating decrotonylation ((2E)-butenoyl) of histones. The protein is Histone deacetylase 8 (hdac8) of Xenopus laevis (African clawed frog).